Reading from the N-terminus, the 76-residue chain is Sec-independent protein translocase protein TatA (76 aa).

A helical transmembrane segment spans residues 1–21 (MGGISIWQLLIIVAIIVLLFG). Positions 43-76 (MADDKSQPQDASFEKVEAKEAASTEQKAKEKEQA) are disordered.

The protein belongs to the TatA/E family. In terms of assembly, the Tat system comprises two distinct complexes: a TatABC complex, containing multiple copies of TatA, TatB and TatC subunits, and a separate TatA complex, containing only TatA subunits. Substrates initially bind to the TatABC complex, which probably triggers association of the separate TatA complex to form the active translocon.

The protein resides in the cell inner membrane. In terms of biological role, part of the twin-arginine translocation (Tat) system that transports large folded proteins containing a characteristic twin-arginine motif in their signal peptide across membranes. TatA could form the protein-conducting channel of the Tat system. The polypeptide is Sec-independent protein translocase protein TatA (Actinobacillus pleuropneumoniae serotype 5b (strain L20)).